The primary structure comprises 143 residues: Large ribosomal subunit protein uL11 (143 aa).

The protein belongs to the universal ribosomal protein uL11 family. In terms of assembly, part of the ribosomal stalk of the 50S ribosomal subunit. Interacts with L10 and the large rRNA to form the base of the stalk. L10 forms an elongated spine to which L12 dimers bind in a sequential fashion forming a multimeric L10(L12)X complex. In terms of processing, one or more lysine residues are methylated.

Its function is as follows. Forms part of the ribosomal stalk which helps the ribosome interact with GTP-bound translation factors. The protein is Large ribosomal subunit protein uL11 of Aromatoleum aromaticum (strain DSM 19018 / LMG 30748 / EbN1) (Azoarcus sp. (strain EbN1)).